The sequence spans 458 residues: Transmembrane protein 143 (458 aa).

Transmembrane regions (helical) follow at residues 277-297 (LLNL…GMVI) and 298-318 (LSDL…FMGV). Ser-329 carries the phosphoserine modification.

It is found in the membrane. In Mus musculus (Mouse), this protein is Transmembrane protein 143 (Tmem143).